Reading from the N-terminus, the 345-residue chain is Dihydroorotase (345 aa).

Zn(2+)-binding residues include histidine 13 and histidine 15. Residues 15 to 17 (HFR) and asparagine 41 each bind substrate. Zn(2+)-binding residues include lysine 98, histidine 135, and histidine 173. Residue lysine 98 is modified to N6-carboxylysine. Residue histidine 135 participates in substrate binding. Leucine 218 contributes to the substrate binding site. Aspartate 246 serves as a coordination point for Zn(2+). Residue aspartate 246 is part of the active site. Residues histidine 250 and alanine 262 each contribute to the substrate site.

The protein belongs to the metallo-dependent hydrolases superfamily. DHOase family. Class II DHOase subfamily. As to quaternary structure, homodimer. Zn(2+) is required as a cofactor.

It carries out the reaction (S)-dihydroorotate + H2O = N-carbamoyl-L-aspartate + H(+). It participates in pyrimidine metabolism; UMP biosynthesis via de novo pathway; (S)-dihydroorotate from bicarbonate: step 3/3. In terms of biological role, catalyzes the reversible cyclization of carbamoyl aspartate to dihydroorotate. The protein is Dihydroorotase of Shewanella pealeana (strain ATCC 700345 / ANG-SQ1).